Reading from the N-terminus, the 480-residue chain is EGF-like repeat and discoidin I-like domain-containing protein 3 (480 aa).

The first 23 residues, 1-23 (MKHLVAAWLLVGLSLGVPQFGKG), serve as a signal peptide directing secretion. One can recognise an EGF-like 1 domain in the interval 24–60 (DICNPNPCENGGICLSGLADDSFSCECPEGFAGPNCS). Intrachain disulfides connect cysteine 26–cysteine 37, cysteine 31–cysteine 48, and cysteine 50–cysteine 59. Residue threonine 73 is glycosylated (O-linked (GalNAc...) threonine). EGF-like domains lie at 74 to 117 (SAGP…IHCQ) and 119 to 155 (NINECEAEPCRNGGICTDLVANYSCECPGEFMGRNCQ). 3 disulfide bridges follow: cysteine 78–cysteine 89, cysteine 83–cysteine 105, and cysteine 107–cysteine 116. Threonine 88 carries O-linked (Fuc...) threonine glycosylation. Residues 96-98 (RGD) carry the Cell attachment site motif. Ca(2+) is bound by residues asparagine 119, isoleucine 120, and glutamate 122. Cystine bridges form between cysteine 123/cysteine 134, cysteine 128/cysteine 143, cysteine 145/cysteine 154, cysteine 158/cysteine 314, cysteine 301/cysteine 305, and cysteine 319/cysteine 476. Aspartate 136 and leucine 137 together coordinate Ca(2+). Asparagine 140 carries N-linked (GlcNAc...) asparagine glycosylation. 2 F5/8 type C domains span residues 158-314 (CSGP…LLGC) and 319-476 (CSEP…LLGC).

As to expression, expressed in angioblasts and early endothelial cells. By embryonic day 13.5, also expressed in a restricted group of non-endothelial cells including chondrocytes and retinal neurons.

The protein resides in the secreted. Promotes adhesion of endothelial cells through interaction with the alpha-v/beta-3 integrin receptor. Inhibits formation of vascular-like structures. May be involved in regulation of vascular morphogenesis of remodeling in embryonic development. The polypeptide is EGF-like repeat and discoidin I-like domain-containing protein 3 (Edil3) (Mus musculus (Mouse)).